The chain runs to 698 residues: ATP-dependent RNA helicase DHX33 (698 aa).

Disordered stretches follow at residues 1–20 and 29–50; these read MPEE…SCPP and TAGG…AQPS. Residues 1 to 71 are required for nucleolar location; sequence MPEEASLPPA…RRSLPIFRAR (71 aa). A compositionally biased stretch (gly residues) spans 30–40; that stretch reads AGGGGGAGGGR. The 169-residue stretch at 75–243 folds into the Helicase ATP-binding domain; the sequence is LAQLRNLDNA…FNRAPVLYLE (169 aa). Residue 88–95 coordinates ATP; that stretch reads GETGSGKT. Residues 185 to 188 carry the DEAH box motif; the sequence is DEAH. Positions 271 to 441 constitute a Helicase C-terminal domain; sequence QIHQEAPASQ…SVILQLLAMK (171 aa). An HA2; required for interaction with EIF3G and RPL26 region spans residues 462 to 553; the sequence is AIAQLDLLGA…ISSEGDHITL (92 aa). The Critical for rDNA-binding motif lies at 536-550; that stretch reads VQSVRKKFISSEGDH.

It belongs to the DEAD box helicase family. DEAH subfamily. Interacts with UBTF. Interacts with DDX3X, EIF3G and EIF3H; the interaction is independent of RNA. Interacts (via HA2 region and Helicase C-terminal domain) with the components of the large ribosomal subunit RPL3, RPL7, RPL26 and RPL27. Binds to mRNA. Interacts (via the helicase C-terminal domain) with MAVS. Binds to double-stranded RNA (via the helicase C-terminal domain). Ubiquitinated, leading to its degradation by the proteasome. Deubiquitinated by USP36.

The protein localises to the nucleus. It is found in the nucleolus. It localises to the nucleoplasm. The protein resides in the cytoplasm. Its subcellular location is the inflammasome. It carries out the reaction ATP + H2O = ADP + phosphate + H(+). Functionally, implicated in nucleolar organization, ribosome biogenesis, protein synthesis and cytoplasmic dsRNA sensing. Stimulates RNA polymerase I transcription of the 47S precursor rRNA. Associates with ribosomal DNA (rDNA) loci where it is involved in POLR1A recruitment. In the cytoplasm, promotes elongation-competent 80S ribosome assembly at the late stage of mRNA translation initiation. Senses cytosolic dsRNA mediating NLRP3 inflammasome formation in macrophages and type I interferon production in myeloid dendritic cells. Required for NLRP3 activation induced by viral dsRNA and bacterial RNA. In dendritic cells, required for induction of type I interferon production induced by cytoplasmic dsRNA via the activation of MAPK and NF-kappa-B signaling pathways. The polypeptide is ATP-dependent RNA helicase DHX33 (Mus musculus (Mouse)).